Reading from the N-terminus, the 319-residue chain is Acetyl-coenzyme A carboxylase carboxyl transferase subunit alpha (319 aa).

Residues 35-296 (NLDEEVQRLR…KAQLLADLSD (262 aa)) form the CoA carboxyltransferase C-terminal domain.

The protein belongs to the AccA family. As to quaternary structure, acetyl-CoA carboxylase is a heterohexamer composed of biotin carboxyl carrier protein (AccB), biotin carboxylase (AccC) and two subunits each of ACCase subunit alpha (AccA) and ACCase subunit beta (AccD).

The protein localises to the cytoplasm. It carries out the reaction N(6)-carboxybiotinyl-L-lysyl-[protein] + acetyl-CoA = N(6)-biotinyl-L-lysyl-[protein] + malonyl-CoA. It functions in the pathway lipid metabolism; malonyl-CoA biosynthesis; malonyl-CoA from acetyl-CoA: step 1/1. Functionally, component of the acetyl coenzyme A carboxylase (ACC) complex. First, biotin carboxylase catalyzes the carboxylation of biotin on its carrier protein (BCCP) and then the CO(2) group is transferred by the carboxyltransferase to acetyl-CoA to form malonyl-CoA. The sequence is that of Acetyl-coenzyme A carboxylase carboxyl transferase subunit alpha from Yersinia enterocolitica serotype O:8 / biotype 1B (strain NCTC 13174 / 8081).